Consider the following 482-residue polypeptide: tRNA sulfurtransferase (482 aa).

The THUMP domain occupies 61 to 165 (LTIRDALTRI…DDRLLLIKGR (105 aa)). ATP contacts are provided by residues 183–184 (LI), Lys265, Gly287, and Gln296. A disulfide bridge links Cys344 with Cys456. Positions 404 to 482 (FGPNDVILDI…GFKNVKVYRP (79 aa)) constitute a Rhodanese domain. Residue Cys456 is the Cysteine persulfide intermediate of the active site.

Belongs to the ThiI family. Interacts with IscS.

It localises to the cytoplasm. The catalysed reaction is [ThiI sulfur-carrier protein]-S-sulfanyl-L-cysteine + a uridine in tRNA + 2 reduced [2Fe-2S]-[ferredoxin] + ATP + H(+) = [ThiI sulfur-carrier protein]-L-cysteine + a 4-thiouridine in tRNA + 2 oxidized [2Fe-2S]-[ferredoxin] + AMP + diphosphate. The enzyme catalyses [ThiS sulfur-carrier protein]-C-terminal Gly-Gly-AMP + S-sulfanyl-L-cysteinyl-[cysteine desulfurase] + AH2 = [ThiS sulfur-carrier protein]-C-terminal-Gly-aminoethanethioate + L-cysteinyl-[cysteine desulfurase] + A + AMP + 2 H(+). The protein operates within cofactor biosynthesis; thiamine diphosphate biosynthesis. Its function is as follows. Catalyzes the ATP-dependent transfer of a sulfur to tRNA to produce 4-thiouridine in position 8 of tRNAs, which functions as a near-UV photosensor. Also catalyzes the transfer of sulfur to the sulfur carrier protein ThiS, forming ThiS-thiocarboxylate. This is a step in the synthesis of thiazole, in the thiamine biosynthesis pathway. The sulfur is donated as persulfide by IscS. This is tRNA sulfurtransferase from Escherichia coli O157:H7.